The primary structure comprises 449 residues: Tryptophan--tRNA ligase (449 aa).

ATP-binding positions include 10–12 (TTT) and 18–19 (GN). The short motif at 11-19 (TTGTPHLGN) is the 'HIGH' region element. Asp-143 contacts L-tryptophan. ATP-binding positions include 155-157 (GRD), Leu-197, and 204-208 (KMSKS). The 'KMSKS' region motif lies at 204 to 208 (KMSKS).

It belongs to the class-I aminoacyl-tRNA synthetase family. As to quaternary structure, homodimer.

It is found in the cytoplasm. The enzyme catalyses tRNA(Trp) + L-tryptophan + ATP = L-tryptophyl-tRNA(Trp) + AMP + diphosphate + H(+). In terms of biological role, catalyzes the attachment of tryptophan to tRNA(Trp). The polypeptide is Tryptophan--tRNA ligase (Pseudomonas syringae pv. tomato (strain ATCC BAA-871 / DC3000)).